A 101-amino-acid polypeptide reads, in one-letter code: Small ribosomal subunit protein uS14 (101 aa).

The tract at residues 44–74 (ASRKLSRLPRDSSPVRLRNRDQVDGRPRGYV) is disordered. Basic and acidic residues predominate over residues 61 to 70 (RNRDQVDGRP).

Belongs to the universal ribosomal protein uS14 family. In terms of assembly, part of the 30S ribosomal subunit. Contacts proteins S3 and S10.

Functionally, binds 16S rRNA, required for the assembly of 30S particles and may also be responsible for determining the conformation of the 16S rRNA at the A site. The chain is Small ribosomal subunit protein uS14 from Cutibacterium acnes (strain DSM 16379 / KPA171202) (Propionibacterium acnes).